A 322-amino-acid chain; its full sequence is Malate dehydrogenase (322 aa).

NAD(+)-binding positions include 10-15 (GSGQIG) and Asp-34. Substrate-binding residues include Arg-83 and Arg-89. NAD(+) is bound by residues Asn-96 and 119 to 121 (ITN). Positions 121 and 152 each coordinate substrate. Catalysis depends on His-176, which acts as the Proton acceptor.

The protein belongs to the LDH/MDH superfamily. MDH type 3 family.

It catalyses the reaction (S)-malate + NAD(+) = oxaloacetate + NADH + H(+). Its function is as follows. Catalyzes the reversible oxidation of malate to oxaloacetate. In Bradyrhizobium sp. (strain BTAi1 / ATCC BAA-1182), this protein is Malate dehydrogenase.